The primary structure comprises 288 residues: POU domain class 2-associating factor 2 (288 aa).

Positions 10 to 32 (KRVYQGVRVKHTVKDLLAEKRSG) constitute an OCA domain. Disordered regions lie at residues 24–52 (DLLA…PFVQ) and 247–274 (PPKV…VKED). Residues 35–48 (SNSRLNGSVSSSQS) show a composition bias toward low complexity.

Belongs to the POU2AF family. As to quaternary structure, interacts with POU2F3 (via the POU domain) in a DNA-dependent manner; this interaction recruits POU2AF2 to chromatin and increases POU2F3 transactivation activity. As to expression, expressed in tuft cells of colon mucosa, as well as in small intestine and thymus.

It localises to the cytoplasm. The protein resides in the cytosol. The protein localises to the nucleus. Its function is as follows. Transcriptional coactivator of POU2F3. This complex drives the development of tuft cells, a rare chemosensory cells that coordinate immune and neural functions within mucosal epithelial tissues. This Homo sapiens (Human) protein is POU domain class 2-associating factor 2.